Here is a 101-residue protein sequence, read N- to C-terminus: ATP-dependent Clp protease adapter protein ClpS (101 aa).

Belongs to the ClpS family. As to quaternary structure, binds to the N-terminal domain of the chaperone ClpA.

Its function is as follows. Involved in the modulation of the specificity of the ClpAP-mediated ATP-dependent protein degradation. The polypeptide is ATP-dependent Clp protease adapter protein ClpS (Mycobacterium bovis (strain ATCC BAA-935 / AF2122/97)).